Consider the following 97-residue polypeptide: Co-chaperonin GroES (97 aa).

The protein belongs to the GroES chaperonin family. Heptamer of 7 subunits arranged in a ring. Interacts with the chaperonin GroEL.

The protein localises to the cytoplasm. Its function is as follows. Together with the chaperonin GroEL, plays an essential role in assisting protein folding. The GroEL-GroES system forms a nano-cage that allows encapsulation of the non-native substrate proteins and provides a physical environment optimized to promote and accelerate protein folding. GroES binds to the apical surface of the GroEL ring, thereby capping the opening of the GroEL channel. This chain is Co-chaperonin GroES, found in Blochmanniella floridana.